We begin with the raw amino-acid sequence, 129 residues long: UPF0325 protein SG1947 (129 aa).

Belongs to the UPF0325 family.

The sequence is that of UPF0325 protein SG1947 from Sodalis glossinidius (strain morsitans).